Consider the following 269-residue polypeptide: Diaminopimelate epimerase (269 aa).

Asparagine 15, glutamine 49, and asparagine 66 together coordinate substrate. Cysteine 75 functions as the Proton donor in the catalytic mechanism. Substrate-binding positions include 76–77 (GN), asparagine 155, asparagine 187, and 204–205 (ER). Cysteine 213 (proton acceptor) is an active-site residue. Residue 214-215 (GS) coordinates substrate.

This sequence belongs to the diaminopimelate epimerase family. Homodimer.

It localises to the cytoplasm. It catalyses the reaction (2S,6S)-2,6-diaminopimelate = meso-2,6-diaminopimelate. The protein operates within amino-acid biosynthesis; L-lysine biosynthesis via DAP pathway; DL-2,6-diaminopimelate from LL-2,6-diaminopimelate: step 1/1. Functionally, catalyzes the stereoinversion of LL-2,6-diaminopimelate (L,L-DAP) to meso-diaminopimelate (meso-DAP), a precursor of L-lysine and an essential component of the bacterial peptidoglycan. The protein is Diaminopimelate epimerase of Rickettsia canadensis (strain McKiel).